Reading from the N-terminus, the 334-residue chain is Protein-methionine-sulfoxide reductase catalytic subunit MsrP (334 aa).

The segment at residues 1–44 (MKKNQFLKESDITAESVFFMKRRQVLKALGISAAALSLPHAAHA) is a signal peptide (tat-type signal). Mo-molybdopterin is bound by residues Asn88, 91–92 (YE), Cys146, Thr181, Asn233, Arg238, and 249–251 (GIK).

The protein belongs to the MsrP family. As to quaternary structure, heterodimer of a catalytic subunit (MsrP) and a heme-binding subunit (MsrQ). It depends on Mo-molybdopterin as a cofactor. Predicted to be exported by the Tat system. The position of the signal peptide cleavage has not been experimentally proven.

The protein localises to the periplasm. It carries out the reaction L-methionyl-[protein] + a quinone + H2O = L-methionyl-(S)-S-oxide-[protein] + a quinol. It catalyses the reaction L-methionyl-[protein] + a quinone + H2O = L-methionyl-(R)-S-oxide-[protein] + a quinol. Its function is as follows. Part of the MsrPQ system that repairs oxidized periplasmic proteins containing methionine sulfoxide residues (Met-O), using respiratory chain electrons. Thus protects these proteins from oxidative-stress damage caused by reactive species of oxygen and chlorine generated by the host defense mechanisms. MsrPQ is essential for the maintenance of envelope integrity under bleach stress, rescuing a wide series of structurally unrelated periplasmic proteins from methionine oxidation, including the primary periplasmic chaperone SurA and the lipoprotein Pal. The catalytic subunit MsrP is non-stereospecific, being able to reduce both (R-) and (S-) diastereoisomers of methionine sulfoxide. The protein is Protein-methionine-sulfoxide reductase catalytic subunit MsrP of Shigella dysenteriae serotype 1 (strain Sd197).